The chain runs to 137 residues: Large ribosomal subunit protein uL11 (137 aa).

It belongs to the universal ribosomal protein uL11 family. As to quaternary structure, part of the ribosomal stalk of the 50S ribosomal subunit. Interacts with L10 and the large rRNA to form the base of the stalk. L10 forms an elongated spine to which L12 dimers bind in a sequential fashion forming a multimeric L10(L12)X complex. Post-translationally, one or more lysine residues are methylated.

Its function is as follows. Forms part of the ribosomal stalk which helps the ribosome interact with GTP-bound translation factors. The protein is Large ribosomal subunit protein uL11 of Mycoplasma pneumoniae (strain ATCC 29342 / M129 / Subtype 1) (Mycoplasmoides pneumoniae).